The sequence spans 578 residues: Arginine--tRNA ligase (578 aa).

The 'HIGH' region motif lies at 127-137; that stretch reads PNLAKEMHVGH.

This sequence belongs to the class-I aminoacyl-tRNA synthetase family. As to quaternary structure, monomer.

It is found in the cytoplasm. It catalyses the reaction tRNA(Arg) + L-arginine + ATP = L-arginyl-tRNA(Arg) + AMP + diphosphate. In Pseudomonas putida (strain ATCC 700007 / DSM 6899 / JCM 31910 / BCRC 17059 / LMG 24140 / F1), this protein is Arginine--tRNA ligase.